Consider the following 338-residue polypeptide: N-acetyl-gamma-glutamyl-phosphate reductase (338 aa).

C148 is a catalytic residue.

This sequence belongs to the NAGSA dehydrogenase family. Type 1 subfamily.

Its subcellular location is the cytoplasm. The enzyme catalyses N-acetyl-L-glutamate 5-semialdehyde + phosphate + NADP(+) = N-acetyl-L-glutamyl 5-phosphate + NADPH + H(+). Its pathway is amino-acid biosynthesis; L-arginine biosynthesis; N(2)-acetyl-L-ornithine from L-glutamate: step 3/4. Its function is as follows. Catalyzes the NADPH-dependent reduction of N-acetyl-5-glutamyl phosphate to yield N-acetyl-L-glutamate 5-semialdehyde. The sequence is that of N-acetyl-gamma-glutamyl-phosphate reductase from Leptospira interrogans serogroup Icterohaemorrhagiae serovar copenhageni (strain Fiocruz L1-130).